The chain runs to 491 residues: Synaptotagmin-9 (491 aa).

Residues 1-52 (MPGARDALCHQALQLLAELCARGALEHDSCQDFIYHLRDRARPRLRDPDISV) lie on the Vesicular side of the membrane. Residues 9–31 (CHQALQLLAELCARGALEHDSCQ) are cysteine motif. Residues 53 to 73 (SLLTLVVTACGLALFGVSLFV) form a helical membrane-spanning segment. At 74–491 (SWKLCWVPWR…AHWHSLMEKR (418 aa)) the chain is on the cytoplasmic side. Polar residues predominate over residues 91 to 104 (SKDNNQEPLNYTDT). The interval 91–147 (SKDNNQEPLNYTDTETNEQENSEDFLDPPTPCPDSSMKISHTSPDIPLSTQPGGQEN) is disordered. Acidic residues predominate over residues 105-116 (ETNEQENSEDFL). The span at 127-144 (MKISHTSPDIPLSTQPGG) shows a compositional bias: polar residues. S177 carries the post-translational modification Phosphoserine. 2 C2 domains span residues 220–341 (ACGK…ILWK) and 352–485 (DLGE…AHWH). Ca(2+) is bound by residues D251, D257, D309, F310, D311, S314, D317, D383, D389, D443, and D445.

This sequence belongs to the synaptotagmin family. As to quaternary structure, homodimer; disulfide-linked via the cysteine motif. Can also form heterodimers with SYT3, SYT6, SYT7 and SYT10. Interacts with DNAJC5 and SNAP25, but not with HSC70. The interaction with DNAJC5 is stimulated tenfold in presence of calcium while the interaction with SNAP25 is inhibited. It depends on Ca(2+) as a cofactor.

It localises to the cytoplasmic vesicle. The protein localises to the secretory vesicle. It is found in the synaptic vesicle membrane. In terms of biological role, may be involved in Ca(2+)-dependent exocytosis of secretory vesicles through Ca(2+) and phospholipid binding to the C2 domain or may serve as Ca(2+) sensors in the process of vesicular trafficking and exocytosis. The polypeptide is Synaptotagmin-9 (Syt9) (Mus musculus (Mouse)).